The chain runs to 377 residues: Succinyl-diaminopimelate desuccinylase (377 aa).

Histidine 66 is a Zn(2+) binding site. The active site involves aspartate 68. Aspartate 99 contacts Zn(2+). Glutamate 133 (proton acceptor) is an active-site residue. Residues glutamate 134, glutamate 162, and histidine 348 each coordinate Zn(2+).

It belongs to the peptidase M20A family. DapE subfamily. Homodimer. Zn(2+) is required as a cofactor. Requires Co(2+) as cofactor.

The catalysed reaction is N-succinyl-(2S,6S)-2,6-diaminopimelate + H2O = (2S,6S)-2,6-diaminopimelate + succinate. It participates in amino-acid biosynthesis; L-lysine biosynthesis via DAP pathway; LL-2,6-diaminopimelate from (S)-tetrahydrodipicolinate (succinylase route): step 3/3. Catalyzes the hydrolysis of N-succinyl-L,L-diaminopimelic acid (SDAP), forming succinate and LL-2,6-diaminopimelate (DAP), an intermediate involved in the bacterial biosynthesis of lysine and meso-diaminopimelic acid, an essential component of bacterial cell walls. In Alcanivorax borkumensis (strain ATCC 700651 / DSM 11573 / NCIMB 13689 / SK2), this protein is Succinyl-diaminopimelate desuccinylase.